Reading from the N-terminus, the 328-residue chain is Formyltetrahydrofolate deformylase 2, mitochondrial (328 aa).

A mitochondrion-targeting transit peptide spans 1–12; the sequence is MIRRVSTTSCLS. Residues 46–129 enclose the ACT domain; that stretch reads FHVFHCPDVV…SVVRVPSLDP (84 aa). Asp-272 is an active-site residue.

It belongs to the PurU family. Expressed in leaves, cotyledons, roots, seeds and flowers.

The protein localises to the mitochondrion. It catalyses the reaction (6R)-10-formyltetrahydrofolate + H2O = (6S)-5,6,7,8-tetrahydrofolate + formate + H(+). Functionally, deformylase involved in photorespiration. Prevents excessive accumulation of 5-formyl tetrahydrofolate (THF), a potent inhibitor of the Gly decarboxylase/Ser hydroxymethyltransferase complex. This is Formyltetrahydrofolate deformylase 2, mitochondrial (PURU2) from Arabidopsis thaliana (Mouse-ear cress).